The primary structure comprises 409 residues: Epoxyqueuosine reductase (409 aa).

The interval 1 to 23 (MDRNPELAIADARPSQDGRAAPS) is disordered. Catalysis depends on Asp178, which acts as the Proton donor. The 30-residue stretch at 232-261 (AAPETPGAHCGSCTRCLGACPTGAIVAPYR) folds into the 4Fe-4S ferredoxin-type domain. The [4Fe-4S] cluster site is built by Cys241, Cys244, Cys247, Cys251, Cys267, Cys294, Cys297, and Cys301.

Belongs to the QueG family. As to quaternary structure, monomer. Cob(II)alamin serves as cofactor. The cofactor is [4Fe-4S] cluster.

The protein localises to the cytoplasm. The enzyme catalyses epoxyqueuosine(34) in tRNA + AH2 = queuosine(34) in tRNA + A + H2O. It functions in the pathway tRNA modification; tRNA-queuosine biosynthesis. Catalyzes the conversion of epoxyqueuosine (oQ) to queuosine (Q), which is a hypermodified base found in the wobble positions of tRNA(Asp), tRNA(Asn), tRNA(His) and tRNA(Tyr). This chain is Epoxyqueuosine reductase, found in Burkholderia pseudomallei (strain K96243).